A 760-amino-acid polypeptide reads, in one-letter code: uncharacterized protein (760 aa).

The first 23 residues, 1–23, serve as a signal peptide directing secretion; that stretch reads MVIKKGFFALSSCTLGLGLILTA. The N-palmitoyl cysteine moiety is linked to residue C24. The S-diacylglycerol cysteine moiety is linked to residue C24. Disordered regions lie at residues 220-262 and 443-482; these read ANGK…NSDN and YEIKAPTNSQNGNGTLLGSFTKSKSNGKEQSGQDEDNQTS. Composition is skewed to polar residues over residues 222–257 and 448–472; these read GKTTSTQTSPQPKNAVSSLQLKQAAEGTSTDNSQDA and PTNSQNGNGTLLGSFTKSKSNGKEQ.

The protein belongs to the MG185/MG260 family.

The protein resides in the cell membrane. This is an uncharacterized protein from Mycoplasma pneumoniae (strain ATCC 29342 / M129 / Subtype 1) (Mycoplasmoides pneumoniae).